We begin with the raw amino-acid sequence, 258 residues long: Type III pantothenate kinase (258 aa).

Residue 6-13 (DIGNTNTV) coordinates ATP. Residues Tyr-100 and 107–110 (GADR) each bind substrate. Asp-109 (proton acceptor) is an active-site residue. Residue Asp-129 coordinates K(+). Thr-132 contacts ATP. Thr-185 lines the substrate pocket.

Belongs to the type III pantothenate kinase family. Homodimer. NH4(+) serves as cofactor. K(+) is required as a cofactor.

The protein localises to the cytoplasm. It catalyses the reaction (R)-pantothenate + ATP = (R)-4'-phosphopantothenate + ADP + H(+). It functions in the pathway cofactor biosynthesis; coenzyme A biosynthesis; CoA from (R)-pantothenate: step 1/5. In terms of biological role, catalyzes the phosphorylation of pantothenate (Pan), the first step in CoA biosynthesis. This Syntrophobacter fumaroxidans (strain DSM 10017 / MPOB) protein is Type III pantothenate kinase.